We begin with the raw amino-acid sequence, 71 residues long: Exodeoxyribonuclease 7 small subunit (71 aa).

It belongs to the XseB family. In terms of assembly, heterooligomer composed of large and small subunits.

The protein resides in the cytoplasm. It catalyses the reaction Exonucleolytic cleavage in either 5'- to 3'- or 3'- to 5'-direction to yield nucleoside 5'-phosphates.. Functionally, bidirectionally degrades single-stranded DNA into large acid-insoluble oligonucleotides, which are then degraded further into small acid-soluble oligonucleotides. The protein is Exodeoxyribonuclease 7 small subunit of Clostridium botulinum (strain ATCC 19397 / Type A).